A 434-amino-acid chain; its full sequence is 5'-deoxyadenosine deaminase (434 aa).

The Zn(2+) site is built by His63 and His65. Residues Glu92 and His184 each contribute to the substrate site. His211 is a binding site for Zn(2+). Positions 214 and 299 each coordinate substrate. Asp299 contacts Zn(2+).

This sequence belongs to the metallo-dependent hydrolases superfamily. MTA/SAH deaminase family. As to quaternary structure, homotetramer. Requires Zn(2+) as cofactor.

The enzyme catalyses 5'-deoxyadenosine + H2O + H(+) = 5'-deoxyinosine + NH4(+). The catalysed reaction is S-adenosyl-L-homocysteine + H2O + H(+) = S-inosyl-L-homocysteine + NH4(+). It carries out the reaction S-methyl-5'-thioadenosine + H2O + H(+) = S-methyl-5'-thioinosine + NH4(+). It catalyses the reaction adenosine + H2O + H(+) = inosine + NH4(+). It participates in amino-acid biosynthesis; S-adenosyl-L-methionine biosynthesis. Its function is as follows. Catalyzes the deamination of three SAM-derived enzymatic products, namely 5'-deoxyadenosine, S-adenosyl-L-homocysteine, and 5'-methylthioadenosine, to produce the inosine analogs. Can also deaminate adenosine. The preferred substrate for this enzyme is 5'-deoxyadenosine, but all these substrates are efficiently deaminated. Likely functions in a S-adenosyl-L-methionine (SAM) recycling pathway from S-adenosyl-L-homocysteine (SAH) produced from SAM-dependent methylation reactions. May also be involved in the recycling of 5'-deoxyadenosine, whereupon the 5'-deoxyribose moiety of 5'-deoxyinosine is further metabolized to deoxyhexoses used for the biosynthesis of aromatic amino acids in methanogens. This chain is 5'-deoxyadenosine deaminase, found in Methanococcoides burtonii (strain DSM 6242 / NBRC 107633 / OCM 468 / ACE-M).